Reading from the N-terminus, the 628-residue chain is Probable alpha-L-arabinofuranosidase A (628 aa).

Positions 1 to 25 (MVAFSALSGVSAVSLLLSLVQNAHG) are cleaved as a signal peptide. 10 N-linked (GlcNAc...) asparagine glycosylation sites follow: asparagine 36, asparagine 51, asparagine 74, asparagine 152, asparagine 171, asparagine 260, asparagine 359, asparagine 440, asparagine 493, and asparagine 610.

Belongs to the glycosyl hydrolase 51 family.

The protein localises to the secreted. The catalysed reaction is Hydrolysis of terminal non-reducing alpha-L-arabinofuranoside residues in alpha-L-arabinosides.. Its pathway is glycan metabolism; L-arabinan degradation. Its function is as follows. Alpha-L-arabinofuranosidase involved in the degradation of arabinoxylan, a major component of plant hemicellulose. Acts only on small linear 1,5-alpha-linked L-arabinofuranosyl oligosaccharides. This Aspergillus niger (strain ATCC MYA-4892 / CBS 513.88 / FGSC A1513) protein is Probable alpha-L-arabinofuranosidase A (abfA).